The sequence spans 894 residues: MAKSNEEPNSNLNTNKPPLKRTKTLAQQPSLNLRVSIAAADNGIGNSSSSSTKTDFEQQQRNYPSFLGIGSTSRKRRPPPPPKPSNITPNVKPPASDFQTKPHSEPKTSPSSSSPPSLPIAITKQQQQQHSISSPIFYLFVITCVIFVPYSAFLQYKLAKLKDMKLQLCCQIDFCSGNGKTSLQKDVVDDGSFSYYILNADSRTISLYIVLFTLVLPFILYKYIDYLPQMINFSRRTNSNKEDVPLKKRVAYMVDVFFSIYPYAKLLALLFATLFLIAFGGLALYAVTGGSMAEALWHSWTYVADAGNHAETEGMGQRIVSVSISAGGMLIFAMMLGLVSDAISEKVDSLRKGKSEVIERNHVLILGWSDKLGSLLKQLAIANKSVGGGVIVVLAEKEKEEMEMDIAKLEFDFMGTSVICRSGSPLILADLKKVSVSKARAIIVLASDENADQSDARALRVVLSLTGVKEALRGHVVVEMSDLDNEPLVKLVGGELIETVVAHDVIGRLMIQCALQPGLAQIWEDILGFENAEFYIKRWPELDGLLFKDILISFPDAIPCGVKVSADGGKIVINPDDNYVLRDGDEVLVIAEDDDTYAPGPLPEVRKGYFPRIRDPPKYPEKILFCGWRRDIDDMIMVLEAFLAPGSELWMFNEVPEKQRERKLAAGELDVFGLENIKLVHREGNAVIRRHLESLPLETFDSILILADESVEDSVAHSDSRSLATLLLIRDIQSRRLPYRDTKSTSLRLSGFSHNSWIREMQQASDKSIIISEILDSRTRNLVSVSRISDYVLSNELVSMALAMVAEDKQINRVLEELFAEEGNEMCIKPAEFYLFDQEELCFYDIMIRGRTRKEIVIGYRLASQERALINPSEKSMTRKWSLDDVFVVIASGE.

Positions 1-124 (MAKSNEEPNS…PPSLPIAITK (124 aa)) are disordered. 3 stretches are compositionally biased toward polar residues: residues 7-16 (EPNSNLNTNK), 24-33 (TLAQQPSLNL), and 44-63 (IGNS…QRNY). 4 consecutive transmembrane segments (helical) span residues 134–154 (SPIF…SAFL), 204–224 (TISL…YKYI), 267–287 (LALL…LYAV), and 319–339 (IVSV…LGLV). RCK N-terminal domains are found at residues 360–501 (RNHV…ETVV) and 620–769 (PEKI…DKSI). A coiled-coil region spans residues 390 to 415 (VIVVLAEKEKEEMEMDIAKLEFDFMG).

This sequence belongs to the castor/pollux (TC 1.A.1.23) family. As to quaternary structure, homotetramer.

The protein localises to the nucleus membrane. Functionally, required for both rhizobial and mycorrhizal symbiosis. Involved in Nod-factor-induced calcium spiking. May induce a change in membrane polarization that activates the opening of a calcium channel required for calcium spiking. Might be calcium gated. This is Probable ion channel SYM8 (SYM8) from Pisum sativum (Garden pea).